A 393-amino-acid polypeptide reads, in one-letter code: Probable pectinesterase 8 (393 aa).

The first 19 residues, 1-19 (MKIISLSISIGIAIIAVLA), serve as a signal peptide directing secretion. Asn100, Asn113, Asn140, Asn156, and Asn163 each carry an N-linked (GlcNAc...) asparagine glycan. Thr165 is a substrate binding site. N-linked (GlcNAc...) asparagine glycosylation is present at Asn182. Residue Gln200 participates in substrate binding. Asp223 acts as the Proton donor in catalysis. The active-site Nucleophile is the Asp244. Residue Asn295 is glycosylated (N-linked (GlcNAc...) asparagine). Arg308 lines the substrate pocket. N-linked (GlcNAc...) asparagine glycans are attached at residues Asn350, Asn369, and Asn378.

The protein belongs to the pectinesterase family. In terms of tissue distribution, expressed in siliques.

The protein localises to the secreted. It localises to the cell wall. The enzyme catalyses [(1-&gt;4)-alpha-D-galacturonosyl methyl ester](n) + n H2O = [(1-&gt;4)-alpha-D-galacturonosyl](n) + n methanol + n H(+). It participates in glycan metabolism; pectin degradation; 2-dehydro-3-deoxy-D-gluconate from pectin: step 1/5. Functionally, acts in the modification of cell walls via demethylesterification of cell wall pectin. The sequence is that of Probable pectinesterase 8 (PME8) from Arabidopsis thaliana (Mouse-ear cress).